We begin with the raw amino-acid sequence, 664 residues long: ATP-dependent RNA helicase MSS116, mitochondrial (664 aa).

The transit peptide at 1–26 (MLTSILIKGRTPVLASRNLLAALSNC) directs the protein to the mitochondrion. A disordered region spans residues 42–79 (NRDQRNFGRNQRNNNSNRYRNSRFNSRPRTRSREDDDE). The span at 48 to 68 (FGRNQRNNNSNRYRNSRFNSR) shows a compositional bias: low complexity. Positions 106–134 (SLLEEGVLDKEIHKAITRMEFPGLTPVQQ) match the Q motif motif. A Helicase ATP-binding domain is found at 139 to 326 (PILSSEDHDV…NNIMNKKECL (188 aa)). Residue 152–159 (AKTGTGKT) coordinates ATP. The DEAD box signature appears at 267–270 (DEAD). A Helicase C-terminal domain is found at 355 to 512 (SIFAAVEHIK…EKYEPSEEIK (158 aa)). The tract at residues 602–664 (GNNKSYDYDD…NYSSRNSNIY (63 aa)) is disordered. Residues 628 to 638 (QNRDYDDEPFR) show a composition bias toward basic and acidic residues. A compositionally biased stretch (low complexity) spans 639–649 (RSNNNRRSFSR). Positions 653 to 664 (KNNYSSRNSNIY) are enriched in polar residues.

Belongs to the DEAD box helicase family. DDX18/HAS1 subfamily.

Its subcellular location is the mitochondrion matrix. It carries out the reaction ATP + H2O = ADP + phosphate + H(+). In terms of biological role, ATP-dependent RNA helicase required for mitochondrial splicing of group I and II introns. Specifically involved in the ATP-dependent splicing of the bl1 intron of COB. Also required for efficient mitochondrial translation. The chain is ATP-dependent RNA helicase MSS116, mitochondrial (MSS116) from Saccharomyces cerevisiae (strain ATCC 204508 / S288c) (Baker's yeast).